The chain runs to 403 residues: Acetate kinase (403 aa).

Residue N7 coordinates Mg(2+). An ATP-binding site is contributed by K14. Residue R95 coordinates substrate. D152 serves as the catalytic Proton donor/acceptor. Residues 212-216 (HLGNG), 286-288 (DMR), and 335-339 (GIGEN) contribute to the ATP site. E389 contacts Mg(2+).

It belongs to the acetokinase family. In terms of assembly, homodimer. The cofactor is Mg(2+). It depends on Mn(2+) as a cofactor.

It is found in the cytoplasm. The enzyme catalyses acetate + ATP = acetyl phosphate + ADP. It participates in metabolic intermediate biosynthesis; acetyl-CoA biosynthesis; acetyl-CoA from acetate: step 1/2. Its function is as follows. Catalyzes the formation of acetyl phosphate from acetate and ATP. Can also catalyze the reverse reaction. This Desulfovibrio desulfuricans (strain ATCC 27774 / DSM 6949 / MB) protein is Acetate kinase.